The chain runs to 316 residues: MAQPSIGQRIVVDVPSTTANLGPGFDCLGAALDLNNRFAMRRIEGDSGRFELIIEGNEGSHLRGGPNNLIYRAAQRVWKAAGLEPVGLEAKVRLAVPPARGLGSSASAIVAGLVGANALVGEPLSKEKLLELAIDIEGHPDNVVPSLLGGLCLTAKAASQRWRVVRCVWINSVKAVVAIPSIRLSTSEARRAMPKDIPISDAVENLGALTLLLQGLRTGNGDLITDGMHDRLHEPYRWPLIKGGLDVRDAALNAGAWGCAISGAGPSVLALCPEDKGQAVSQAMVKAWEAEGVASRAPLLSIQSGGSHWQPQIEDE.

97 to 107 (PPARGLGSSAS) provides a ligand contact to ATP.

Belongs to the GHMP kinase family. Homoserine kinase subfamily.

The protein localises to the cytoplasm. It carries out the reaction L-homoserine + ATP = O-phospho-L-homoserine + ADP + H(+). It participates in amino-acid biosynthesis; L-threonine biosynthesis; L-threonine from L-aspartate: step 4/5. Catalyzes the ATP-dependent phosphorylation of L-homoserine to L-homoserine phosphate. This is Homoserine kinase from Prochlorococcus marinus (strain MIT 9313).